Reading from the N-terminus, the 448-residue chain is DNA repair protein RadA (448 aa).

The segment at C10–C27 adopts a C4-type zinc-finger fold. G91 to S98 is a binding site for ATP. A RadA KNRFG motif motif is present at residues K250–G254. Positions E349–S448 are lon-protease-like.

Belongs to the RecA family. RadA subfamily.

Functionally, DNA-dependent ATPase involved in processing of recombination intermediates, plays a role in repairing DNA breaks. Stimulates the branch migration of RecA-mediated strand transfer reactions, allowing the 3' invading strand to extend heteroduplex DNA faster. Binds ssDNA in the presence of ADP but not other nucleotides, has ATPase activity that is stimulated by ssDNA and various branched DNA structures, but inhibited by SSB. Does not have RecA's homology-searching function. This Rickettsia bellii (strain RML369-C) protein is DNA repair protein RadA.